Consider the following 272-residue polypeptide: ATP synthase subunit a (272 aa).

The next 6 membrane-spanning stretches (helical) occupy residues 41-61 (VLNI…LSIF), 110-130 (FVWV…FPFI), 143-165 (VPSA…ILFY), 188-208 (VFFI…PISL), 222-242 (IFIL…NVPW), and 243-263 (AIFH…LTIV).

Belongs to the ATPase A chain family. In terms of assembly, F-type ATPases have 2 components, CF(1) - the catalytic core - and CF(0) - the membrane proton channel. CF(1) has five subunits: alpha(3), beta(3), gamma(1), delta(1), epsilon(1). CF(0) has three main subunits: a(1), b(2) and c(9-12). The alpha and beta chains form an alternating ring which encloses part of the gamma chain. CF(1) is attached to CF(0) by a central stalk formed by the gamma and epsilon chains, while a peripheral stalk is formed by the delta and b chains.

Its subcellular location is the cell membrane. Key component of the proton channel; it plays a direct role in the translocation of protons across the membrane. The polypeptide is ATP synthase subunit a (Buchnera aphidicola subsp. Schizaphis graminum (strain Sg)).